Reading from the N-terminus, the 311-residue chain is Heparan sulfate glucosamine 3-O-sulfotransferase 1 (311 aa).

The signal sequence occupies residues 1–20 (MTLLLLGAVLLVAQPQLVHS). A glycan (N-linked (GlcNAc...) asparagine) is linked at Asn-52. Residues 68–72 (KGGTR), Arg-151, and Ser-159 contribute to the 3'-phosphoadenylyl sulfate site. 3 N-linked (GlcNAc...) asparagine glycosylation sites follow: Asn-196, Asn-246, and Asn-253. Residue Tyr-259 participates in 3'-phosphoadenylyl sulfate binding. A disulfide bridge links Cys-260 with Cys-269. Position 274-278 (274-278 (KGRAH)) interacts with 3'-phosphoadenylyl sulfate.

The protein belongs to the sulfotransferase 1 family.

It is found in the golgi apparatus lumen. It carries out the reaction alpha-D-glucosaminyl-[heparan sulfate](n) + 3'-phosphoadenylyl sulfate = 3-sulfo-alpha-D-glucosaminyl-[heparan sulfate](n) + adenosine 3',5'-bisphosphate + H(+). Its function is as follows. Sulfotransferase that utilizes 3'-phospho-5'-adenylyl sulfate (PAPS) to catalyze the transfer of a sulfo group to position 3 of glucosamine residues in heparan. Catalyzes the rate limiting step in the biosynthesis of heparan sulfate (HSact). This modification is a crucial step in the biosynthesis of anticoagulant heparan sulfate as it completes the structure of the antithrombin pentasaccharide binding site. The chain is Heparan sulfate glucosamine 3-O-sulfotransferase 1 (Hs3st1) from Mus musculus (Mouse).